The following is a 528-amino-acid chain: Glucosidase 2 subunit beta (528 aa).

The N-terminal stretch at 1 to 14 (MLLPLLLLLPMCWA) is a signal peptide. Position 24 is a phosphoserine; by FAM20C (serine 24). LDL-receptor class A domains follow at residues 37 to 71 (FTCLDGSATIPFDQVNDDYCDCKDGSDEPGTAACP) and 72 to 113 (NGSF…VICE). 2 disulfides stabilise this stretch: cysteine 39–cysteine 58 and cysteine 56–cysteine 70. Aspartate 49 serves as a coordination point for substrate. Glutamine 50, aspartate 53, tyrosine 55, aspartate 57, aspartate 63, and glutamate 64 together coordinate Ca(2+). Aspartate 53 lines the substrate pocket. A glycan (N-linked (GlcNAc...) asparagine) is linked at asparagine 72. Disulfide bonds link cysteine 77–cysteine 99, cysteine 97–cysteine 112, and cysteine 100–cysteine 116. Serine 89 is subject to Phosphoserine; by PKC. 6 residues coordinate Ca(2+): arginine 91, aspartate 94, valine 96, aspartate 98, aspartate 104, and glutamate 105. Lysine 166 is modified (N6-succinyllysine). Serine 168 carries the post-translational modification Phosphoserine; by FAM20C. 2 EF-hand domains span residues 209 to 244 (QEQELAADAFKELDDDMDGTVSVTELQTHPELDTDG) and 245 to 290 (DGAL…TDLP). Residues aspartate 222, aspartate 224, aspartate 226, threonine 228, and glutamate 233 each contribute to the Ca(2+) site. 2 disordered regions span residues 234-266 (LQTHPELDTDGDGALSEAEAQALLSGDTQTDAT) and 281-357 (RSEA…DKMP). A compositionally biased stretch (low complexity) spans 247–258 (ALSEAEAQALLS). Positions 312–337 (TEEEEEEEEEEEEEAEEEEEEEDSEE) are enriched in acidic residues. Positions 338–348 (APPPLSPPQPA) are enriched in pro residues. Phosphoserine; by PKC occurs at positions 383 and 390. Positions 413–514 (SQCYELTTNE…ELMTPAACPE (102 aa)) constitute an MRH domain. A disulfide bridge links cysteine 415 with cysteine 428. Serine 434 is modified (phosphoserine; by PKC). 2 cysteine pairs are disulfide-bonded: cysteine 471-cysteine 500 and cysteine 485-cysteine 512. Asparagine 476 is a glycosylation site (N-linked (GlcNAc...) asparagine). The Prevents secretion from ER signature appears at 525–528 (HDEL).

Heterodimer of a catalytic alpha subunit (GANAB) and a beta subunit (PRKCSH). Binds glycosylated PTPRC.

The protein localises to the endoplasmic reticulum. It functions in the pathway glycan metabolism; N-glycan metabolism. Its function is as follows. Regulatory subunit of glucosidase II that cleaves sequentially the 2 innermost alpha-1,3-linked glucose residues from the Glc(2)Man(9)GlcNAc(2) oligosaccharide precursor of immature glycoproteins. Required for efficient PKD1/Polycystin-1 biogenesis and trafficking to the plasma membrane of the primary cilia. This Homo sapiens (Human) protein is Glucosidase 2 subunit beta.